The following is a 299-amino-acid chain: Probable endonuclease 4 (299 aa).

Zn(2+)-binding residues include His-68, His-110, Glu-145, Asp-179, His-182, His-214, Asp-227, His-229, and Glu-259.

Belongs to the AP endonuclease 2 family. Zn(2+) is required as a cofactor.

It carries out the reaction Endonucleolytic cleavage to 5'-phosphooligonucleotide end-products.. Functionally, endonuclease IV plays a role in DNA repair. It cleaves phosphodiester bonds at apurinic or apyrimidinic (AP) sites, generating a 3'-hydroxyl group and a 5'-terminal sugar phosphate. This chain is Probable endonuclease 4, found in Exiguobacterium sibiricum (strain DSM 17290 / CCUG 55495 / CIP 109462 / JCM 13490 / 255-15).